Here is a 535-residue protein sequence, read N- to C-terminus: uncharacterized protein (535 aa).

6 helical membrane-spanning segments follow: residues 55-75 (LITIICHLFLLLNIFISIPII), 82-102 (FMPVGFTALAAILLAMQIMFV), 115-135 (IICFLLAIDVLVVFLSPILRH), 143-163 (AFVLWAFLMSLWIVITDLMLF), 201-221 (STILSVILTILTIHTLVTLIM), and 346-366 (VSGPYVLVAHGIGGVYSNVFA).

It is found in the membrane. This is an uncharacterized protein from Schizosaccharomyces pombe (strain 972 / ATCC 24843) (Fission yeast).